The chain runs to 1010 residues: Outer kinetochore KNL1 complex subunit knl-1 (1010 aa).

9 consecutive repeat copies span residues 85 to 88 (MDIS), 109 to 112 (MDMS), 228 to 231 (MDTS), 255 to 258 (MDIT), 278 to 281 (MDIS), 323 to 326 (MDIT), 346 to 349 (MDIS), 402 to 405 (MDIT), and 428 to 431 (MDIS). Residues 85–431 (MDISESPACT…LQKEDLMDIS (347 aa)) form a 9 X 4 AA repeats of M-[D/E]-[I/L/M]-[S/T] region. Coiled coils occupy residues 820–915 (RIVE…GLDK) and 956–988 (KALR…KFAQ).

Component of the KNL1 complex composed of knl-1 and kbp-5. Part of the ten-subunit outer kinetochore KMN network that includes the KNL1, MIS12 and NDC80 complexes. Interacts with the protein phosphatase 1 (PP1) catalytic subunit gsp-1; the interaction is direct. Interacts with the protein phosphatase 1 (PP1) catalytic subunit gsp-2; the interaction is direct. Interacts with the MIS12 complex subunits kbp-1, kbp-2 and mis-12. Interacts with the NDC80 complex components ndc-80 and him-10. Interacts with knl-3. Interacts with kbp-3. Interacts with kbp-4. Interacts with kbp-5.

The protein resides in the cytoplasm. The protein localises to the cell cortex. Its subcellular location is the chromosome. It is found in the centromere. It localises to the kinetochore. Its function is as follows. Acts as a component of the outer kinetochore KNL1 complex that serves as a docking point for spindle assembly checkpoint components and mediates microtubule-kinetochore interactions. Kinetochores, consisting of a centromere-associated inner segment and a microtubule-contacting outer segment, play a crucial role in chromosome segregation by mediating the physical connection between centromeric DNA and spindle microtubules. The outer kinetochore is made up of the ten-subunit KMN network, comprising the MIS12, NDC80 and KNL1 complexes, and auxiliary microtubule-associated components; together they connect the outer kinetochore with the inner kinetochore, bind microtubules, and mediate interactions with mitotic checkpoint proteins that delay anaphase until chromosomes are bioriented on the spindle. Binds the protein phosphatase 1 catalytic subunits gsp-1 and gsp-2, which has a role in delaying formation of load-bearing kinetochore-microtubule attachments. Required for the recruitment of spindle-assembly checkpoint components bub-1 and mdf-1/2 to unattached kinetochores. Binds microtubules which plays a role in silencing of the spindle assembly checkpoint, but not the formation of load-bearing microtubule-kinetochore attachments. Has a role in the correct localization of the spindly-like protein spdl-1 and the RZZ complex that is composed of rod-1, czw-1 and zwl-1 to kinetochores. The protein is Outer kinetochore KNL1 complex subunit knl-1 (knl-1) of Caenorhabditis elegans.